A 1055-amino-acid polypeptide reads, in one-letter code: MQPEEGTGWLLELLSEVQLQQYFLRLRDDLNITRLSHFEYVKNEDLEKIGMGRPGQRRLWEAVKRRKAMCKRKSWMSKVFSGKRLEAEFPSQHSQSTFRKPSPTPGSLPGEGTLQSLTCLIGEKDLRLLEKLGDGSFGVVRRGEWDAPAGKTVSVAVKCLKPDVLSQPEAMDDFIREVNAMHSLDHRNLIRLYGVVLTLPMKMVTELAPLGSLLDRLRKHQGHFLLGTLSRYAVQVAEGMAYLESKRFIHRDLAARNLLLATRDLVKIGDFGLMRALPQNDDHYVMQEHRKVPFAWCAPESLKTRTFSHASDTWMFGVTLWEMFTYGQEPWIGLNGSQILHKIDKEGERLPRPEDCPQDIYNVMVQCWAHKPEDRPTFVALRDFLLEAQPTDMRALQDFEEPDKLHIQMNDVITVIEGRAENYWWRGQNTRTLCVGPFPRNVVTSVAGLSAQDISQPLQNSFIHTGHGDSDPRHCWGFPDRIDELYLGNPMDPPDLLSVELSTSRPTQHLGRVKREPPPRPPQPAIFTQKTTYDPVSEDPDPLSSDFKRLGLRKPALPRGLWLAKPSARVPGTKADRSSGGEVTLIDFGEEPVVPTPRPCAPSLAQLAMDACSLLDKTPPQSPTRALPRPLHPTPVVDWDARPLPPPPAYDDVAQDEDDFEVCSINSTLVGAGLPAGPSQGETNYAFVPEQAQMPPALEDNLFLPPQGGGKPPSSVQTAEIFQALQQECMRQLQVPTGQLTPSPTPGGDDKPQVPPRVPIPPRPTRPRVELSPAPSGEEETSRWPGPASPPRVPPREPLSPQGSRTPSPLVPPGSSPLPHRLSSSPGKTMPTTQSFASDPKYATPQVIQAPGPRAGPCILPIVRDGRKVSSTHYYLLPERPPYLERYQRFLREAQSPEEPAALPVPPLLPPPSTPAPAAPTATVRPMPQAAPDPKANFSTNNSNPGARPPSLRAAARLPQRGCPGDGQEAARPADKVQMLQAMVHGVTTEECQAALQSHSWSVQRAAQYLKVEQLFGLGLRPRVECHKVLEMFDWNLEQAGCHLLGSCGPAHHKR.

Positions 1 to 110 (MQPEEGTGWL…PSPTPGSLPG (110 aa)) are SAM-like domain. The disordered stretch occupies residues 91-110 (SQHSQSTFRKPSPTPGSLPG). T113 carries the post-translational modification Phosphothreonine. The Protein kinase domain occupies 126–385 (LRLLEKLGDG…PTFVALRDFL (260 aa)). Residues 132-140 (LGDGSFGVV) and K158 contribute to the ATP site. D252 serves as the catalytic Proton acceptor. Y284 carries the post-translational modification Phosphotyrosine; by SRC and autocatalysis. The SH3 domain maps to 388 to 448 (AQPTDMRALQ…PRNVVTSVAG (61 aa)). In terms of domain architecture, CRIB spans 454-466 (ISQPLQNSFIHTG). The tract at residues 505–548 (RPTQHLGRVKREPPPRPPQPAIFTQKTTYDPVSEDPDPLSSDFK) is disordered. 2 positions are modified to phosphotyrosine: P518 and Y533. The segment at 638-667 (DWDARPLPPPPAYDDVAQDEDDFEVCSINS) is required for interaction with SRC. The interval 647 to 650 (PPAY) is required for interaction with NEDD4. Positions 737–855 (TGQLTPSPTP…QVIQAPGPRA (119 aa)) are disordered. The tract at residues 748-891 (GDDKPQVPPR…PYLERYQRFL (144 aa)) is EBD domain. 2 stretches are compositionally biased toward pro residues: residues 753-764 (QVPPRVPIPPRP) and 787-798 (PASPPRVPPREP). Residues 817–827 (PLPHRLSSSPG) show a composition bias toward low complexity. A Phosphotyrosine modification is found at Y842. Residue R854 is modified to Omega-N-methylarginine. A phosphotyrosine mark is found at Y874 and Y887. S896 carries the phosphoserine modification. A disordered region spans residues 896–952 (SPEEPAALPVPPLLPPPSTPAPAAPTATVRPMPQAAPDPKANFSTNNSNPGARPPSL). A compositionally biased stretch (pro residues) spans 903–918 (LPVPPLLPPPSTPAPA). The UBA domain maps to 973-1013 (PADKVQMLQAMVHGVTTEECQAALQSHSWSVQRAAQYLKVE).

It belongs to the protein kinase superfamily. Tyr protein kinase family. In terms of assembly, homodimer. Interacts with CSPG4 (activated). Interacts with MERTK (activated); stimulates autophosphorylation. May interact (phosphorylated) with HSP90AB1; maintains kinase activity. Interacts with NPHP1. Interacts with SNX9 (via SH3 domain). Interacts with SRC (via SH2 and SH3 domain). Part of a collagen stimulated complex involved in cell migration composed of CDC42, CRK, TNK2 and BCAR1/p130cas. Interacts with BCAR1/p130cas via SH3 domains. Forms complexes with GRB2 and numerous receptor tyrosine kinases (RTK) including LTK, AXL or PDGFRL, in which GRB2 promotes RTK recruitment by TNK2. Interacts with CDC42. Interacts with EGFR, and this interaction is dependent on EGF stimulation and kinase activity of EGFR. Interacts (via kinase domain) with AKT1. Interacts with NEDD4 (via WW3 domain). NEDD4L and EGF promote association with NEDD4. The cofactor is Mg(2+). Autophosphorylation regulates kinase activity. Phosphorylation on Tyr-533 is required for interaction with SRC and is observed during association with clathrin-coated pits. In terms of processing, polyubiquitinated by NEDD4 and NEDD4L. Degradation can be induced by EGF and is lysosome-dependent. As to expression, ubiquitously present in all tissues tested. Highly expressed in the adult central nervous system (CNS); hippocampus, neocortex, and cerebellum, both at dendritic spines and presynaptic axon terminals. Levels are strongly increased during enhanced neural activity.

It is found in the cell membrane. The protein localises to the nucleus. The protein resides in the endosome. It localises to the cell junction. Its subcellular location is the adherens junction. It is found in the cytoplasmic vesicle membrane. The protein localises to the cytoplasmic vesicle. The protein resides in the clathrin-coated vesicle. It localises to the membrane. Its subcellular location is the clathrin-coated pit. It is found in the cytoplasm. The protein localises to the cytosol. The enzyme catalyses L-tyrosyl-[protein] + ATP = O-phospho-L-tyrosyl-[protein] + ADP + H(+). It carries out the reaction L-seryl-[protein] + ATP = O-phospho-L-seryl-[protein] + ADP + H(+). The catalysed reaction is L-threonyl-[protein] + ATP = O-phospho-L-threonyl-[protein] + ADP + H(+). Functionally, non-receptor tyrosine-protein and serine/threonine-protein kinase that is implicated in cell spreading and migration, cell survival, cell growth and proliferation. Transduces extracellular signals to cytosolic and nuclear effectors. Phosphorylates AKT1, AR, MCF2, WASL and WWOX. Implicated in trafficking and clathrin-mediated endocytosis through binding to epidermal growth factor receptor (EGFR) and clathrin. Binds to both poly- and mono-ubiquitin and regulates ligand-induced degradation of EGFR, thereby contributing to the accumulation of EGFR at the limiting membrane of early endosomes. Downstream effector of CDC42 which mediates CDC42-dependent cell migration via phosphorylation of BCAR1. May be involved both in adult synaptic function and plasticity and in brain development. Activates AKT1 by phosphorylating it on 'Tyr-176'. Phosphorylates AR on 'Tyr-267' and 'Tyr-363' thereby promoting its recruitment to androgen-responsive enhancers (AREs). Phosphorylates WWOX on 'Tyr-287'. Phosphorylates MCF2, thereby enhancing its activity as a guanine nucleotide exchange factor (GEF) toward Rho family proteins. Contributes to the control of AXL receptor levels. Confers metastatic properties on cancer cells and promotes tumor growth by negatively regulating tumor suppressor such as WWOX and positively regulating pro-survival factors such as AKT1 and AR. The chain is Activated CDC42 kinase 1 (Tnk2) from Mus musculus (Mouse).